A 308-amino-acid chain; its full sequence is Membrane protein insertase YidC 1 (308 aa).

A signal peptide spans 1–22 (MKSIKRFALSAMGVAMLLVLTG). Residue Cys-23 is the site of N-palmitoyl cysteine attachment. The S-diacylglycerol cysteine moiety is linked to residue Cys-23. Transmembrane regions (helical) follow at residues 60-80 (FGVA…PLGI), 135-155 (FGGV…AIYF), 168-188 (YLGI…GVLY), 211-226 (MIYM…SLFS), and 232-252 (LYWV…NYIV). Residues 263-308 (ELAKNPPKASAFSKPSGRKDVTPEQPTAITSKKKHKNRNAGKQRSR) form a disordered region. Basic residues predominate over residues 293-308 (SKKKHKNRNAGKQRSR).

Belongs to the OXA1/ALB3/YidC family. Type 2 subfamily.

It localises to the cell membrane. Functionally, required for the insertion and/or proper folding and/or complex formation of integral membrane proteins into the membrane. Involved in integration of membrane proteins that insert both dependently and independently of the Sec translocase complex, as well as at least some lipoproteins. The chain is Membrane protein insertase YidC 1 from Streptococcus pneumoniae serotype 4 (strain ATCC BAA-334 / TIGR4).